Reading from the N-terminus, the 206-residue chain is Small ribosomal subunit protein uS5 (206 aa).

Residues 1–15 show a composition bias toward polar residues; the sequence is MTDTPTKQETQSNKD. Residues 1 to 50 form a disordered region; it reads MTDTPTKQETQSNKDNVPGAIPVEQKKNNRNDRKRNRRGDSKNLERDSDW. Positions 38–50 are enriched in basic and acidic residues; that stretch reads RGDSKNLERDSDW. Residues 50 to 113 form the S5 DRBM domain; that stretch reads WQERVVQIRR…SDGKKNLVRV (64 aa).

It belongs to the universal ribosomal protein uS5 family. As to quaternary structure, part of the 30S ribosomal subunit. Contacts proteins S4 and S8.

With S4 and S12 plays an important role in translational accuracy. Its function is as follows. Located at the back of the 30S subunit body where it stabilizes the conformation of the head with respect to the body. This is Small ribosomal subunit protein uS5 from Prochlorococcus marinus (strain MIT 9215).